Consider the following 682-residue polypeptide: Methionine--tRNA ligase (682 aa).

Positions 14–24 (PYANGSIHLGH) match the 'HIGH' region motif. Cys145, Cys148, Cys158, and Cys161 together coordinate Zn(2+). Residues 331–335 (KMSKS) carry the 'KMSKS' region motif. Residue Lys334 coordinates ATP. One can recognise a tRNA-binding domain in the interval 580–682 (AFAAVDLRVA…SGAKPGQRIK (103 aa)).

It belongs to the class-I aminoacyl-tRNA synthetase family. MetG type 1 subfamily. Homodimer. Requires Zn(2+) as cofactor.

Its subcellular location is the cytoplasm. The catalysed reaction is tRNA(Met) + L-methionine + ATP = L-methionyl-tRNA(Met) + AMP + diphosphate. In terms of biological role, is required not only for elongation of protein synthesis but also for the initiation of all mRNA translation through initiator tRNA(fMet) aminoacylation. The polypeptide is Methionine--tRNA ligase (Pseudomonas savastanoi pv. phaseolicola (strain 1448A / Race 6) (Pseudomonas syringae pv. phaseolicola (strain 1448A / Race 6))).